The sequence spans 734 residues: Fc receptor-like protein 3 (734 aa).

The first 17 residues, 1-17, serve as a signal peptide directing secretion; the sequence is MLLWLLLLILTPGREQS. Residues 18-573 are Extracellular-facing; the sequence is GVAPKAVLLL…GTSRNRTGLT (556 aa). 6 consecutive Ig-like C2-type domains span residues 21-98, 99-182, 192-270, 284-369, 383-470, and 476-563; these read PKAV…VEFS, PDWL…KPLN, PVLR…HSIK, PVSN…PILS, PVLT…LRVT, and PVLT…LNVT. 6 cysteine pairs are disulfide-bonded: C44/C82, C120/C163, C211/C260, C309/C358, C404/C451, and C497/C544. Residue N561 is glycosylated (N-linked (GlcNAc...) asparagine). The helical transmembrane segment at 574-594 threads the bilayer; the sequence is AAGITGLVLSILVLAAAAALL. The Cytoplasmic portion of the chain corresponds to 595-734; the sequence is HYARARRKPG…VPRVLLASDH (140 aa). The tract at residues 603-655 is disordered; that stretch reads PGGLSATGTSSHSPSECQEPSSSRPSRIDPQEPTHSKPLAPMELEPMYSNVNP. Positions 608–627 are enriched in polar residues; that stretch reads ATGTSSHSPSECQEPSSSRP. Residues 628 to 637 are compositionally biased toward basic and acidic residues; it reads SRIDPQEPTH. 4 short sequence motifs (ITIM motif) span residues 648–653, 660–665, 690–695, and 720–725; these read PMYSNV, PIYSQI, VLYSEL, and ENYENV. 4 positions are modified to phosphotyrosine: Y650, Y662, Y692, and Y722. A disordered region spans residues 695-734; it reads LKKTHPDDSAGEASSRGRAHEEDDEENYENVPRVLLASDH.

Interacts (via phosphorylated ITIM motifs) with phosphatases INPP5D, PTPN6 and PTPN11. Interacts (via ITIM motifs) SYK and ZAP70. Interacts with IZUMO1R/JUNO. Interacts (via extracellular domain) with IZUMO1; the interaction replaces IZUMO1R/JUNO as IZUMO1 receptor after adhesion between sperm and egg. Post-translationally, phosphorylated on cytoplasmic tyrosines; required for interaction with protein tyrosine phosphatases and protein tyrosine kinases. In terms of tissue distribution, primarily expressed in secondary lymphoid tissues by mature subsets of B-cells. Low expression on transitional B cells which increases to higher surface expression on mature and memory B-cells with innate-like features (at protein level). Expressed a low levels in naive and germinal center B-cells but also expressed in NK cells (at protein level). Expressed in unfertilized oocytes (at protein level). Expressed in a population of thymically derived naturally occurring regulatory T-cells that exhibits a memory phenotype, specialized in suppressing immune response to self-antigens. Detected in spleen, lymph node, peripheral blood lymphocytes, thymus, bone marrow, kidney, salivary gland, adrenal gland and uterus.

The protein localises to the cell membrane. It localises to the cell projection. The protein resides in the microvillus membrane. Its function is as follows. Promotes TLR9-induced B-cell proliferation, activation and survival but inhibits antibody production and suppresses plasma cell differentiation. Enhances activation of NF-kappa-B and MAPK signaling pathways in TLR9 stimulated B-cells. Has inhibitory potentional on B-cell receptor (BCR)-mediated signaling, possibly through association with SH2 domain-containing phosphatases. Inhibits cell tyrosine phosphorylation, calcium mobilization and activation-induced cell death induced through BCR signaling. Regulatory T-cells expressing FCRL3 exhibit a memory phenotype, are relatively nonresponsive to antigenic stimulation in presence of IL2 and have reduced capacity to suppress the proliferation of effector T-cells. Acts as a human-specific epitope on the cell surface of oocytes (oolemma) and plays a role during sperm-egg adhesion and fusion. Interacts with the IZUMO1-IZUMO1R/JUNO sperm-egg complex and replaces IZUMO1R/JUNO as IZUMO1 receptor during fertilization, thereby permitting species-specific gamete fusion. The protein is Fc receptor-like protein 3 of Homo sapiens (Human).